A 242-amino-acid polypeptide reads, in one-letter code: 1-(5-phosphoribosyl)-5-[(5-phosphoribosylamino)methylideneamino] imidazole-4-carboxamide isomerase (242 aa).

Aspartate 8 serves as the catalytic Proton acceptor. Aspartate 129 functions as the Proton donor in the catalytic mechanism.

It belongs to the HisA/HisF family.

It localises to the cytoplasm. It catalyses the reaction 1-(5-phospho-beta-D-ribosyl)-5-[(5-phospho-beta-D-ribosylamino)methylideneamino]imidazole-4-carboxamide = 5-[(5-phospho-1-deoxy-D-ribulos-1-ylimino)methylamino]-1-(5-phospho-beta-D-ribosyl)imidazole-4-carboxamide. The protein operates within amino-acid biosynthesis; L-histidine biosynthesis; L-histidine from 5-phospho-alpha-D-ribose 1-diphosphate: step 4/9. The sequence is that of 1-(5-phosphoribosyl)-5-[(5-phosphoribosylamino)methylideneamino] imidazole-4-carboxamide isomerase from Clostridium botulinum (strain Okra / Type B1).